Reading from the N-terminus, the 438-residue chain is Glutamate-1-semialdehyde 2,1-aminomutase (438 aa).

Residue K272 is modified to N6-(pyridoxal phosphate)lysine.

Belongs to the class-III pyridoxal-phosphate-dependent aminotransferase family. HemL subfamily. In terms of assembly, homodimer. The cofactor is pyridoxal 5'-phosphate.

The protein localises to the cytoplasm. The catalysed reaction is (S)-4-amino-5-oxopentanoate = 5-aminolevulinate. Its pathway is porphyrin-containing compound metabolism; protoporphyrin-IX biosynthesis; 5-aminolevulinate from L-glutamyl-tRNA(Glu): step 2/2. The protein operates within porphyrin-containing compound metabolism; chlorophyll biosynthesis. The sequence is that of Glutamate-1-semialdehyde 2,1-aminomutase from Chloroflexus aggregans (strain MD-66 / DSM 9485).